Here is a 148-residue protein sequence, read N- to C-terminus: Cytochrome c oxidase subunit 6, mitochondrial (148 aa).

A mitochondrion-targeting transit peptide spans 1 to 40; the sequence is MLSRAIFRNPVINRTLLRARPGAYHATRLTKNTFIQSRKY.

The protein belongs to the cytochrome c oxidase subunit 5A family. In terms of assembly, component of the cytochrome c oxidase (complex IV, CIV), a multisubunit enzyme composed of 12 subunits. The complex is composed of a catalytic core of 3 subunits COX1, COX2 and COX3, encoded in the mitochondrial DNA, and 9 supernumerary subunits COX4, COX5A (or COX5B), COX6, COX7, COX8, COX9, COX12, COX13 and COX26, which are encoded in the nuclear genome. The complex exists as a monomer or a dimer and forms supercomplexes (SCs) in the inner mitochondrial membrane with a dimer of ubiquinol-cytochrome c oxidoreductase (cytochrome b-c1 complex, complex III, CIII), resulting in 2 different assemblies (supercomplexes III(2)IV and III(2)IV(2)). COX26 interacts with COX1, COX2, COX6 and COX9.

Its subcellular location is the mitochondrion inner membrane. Its pathway is energy metabolism; oxidative phosphorylation. Its function is as follows. Component of the cytochrome c oxidase, the last enzyme in the mitochondrial electron transport chain which drives oxidative phosphorylation. The respiratory chain contains 3 multisubunit complexes succinate dehydrogenase (complex II, CII), ubiquinol-cytochrome c oxidoreductase (cytochrome b-c1 complex, complex III, CIII) and cytochrome c oxidase (complex IV, CIV), that cooperate to transfer electrons derived from NADH and succinate to molecular oxygen, creating an electrochemical gradient over the inner membrane that drives transmembrane transport and the ATP synthase. Cytochrome c oxidase is the component of the respiratory chain that catalyzes the reduction of oxygen to water. Electrons originating from reduced cytochrome c in the intermembrane space (IMS) are transferred via the dinuclear copper A center (CU(A)) of COX2 and heme A of COX1 to the active site in COX1, a binuclear center (BNC) formed by heme A3 and copper B (CU(B)). The BNC reduces molecular oxygen to 2 water molecules using 4 electrons from cytochrome c in the IMS and 4 protons from the mitochondrial matrix. COX6 may stabilize the region of CIV at the interface with CIII, supporting a role in formation or stability of the CIII(2)IV(2) SC. This chain is Cytochrome c oxidase subunit 6, mitochondrial (COX6), found in Saccharomyces cerevisiae (strain ATCC 204508 / S288c) (Baker's yeast).